The chain runs to 433 residues: UDP-N-acetylmuramate--L-alanine ligase (433 aa).

108–114 lines the ATP pocket; the sequence is GAHGKTS.

Belongs to the MurCDEF family.

It is found in the cytoplasm. It catalyses the reaction UDP-N-acetyl-alpha-D-muramate + L-alanine + ATP = UDP-N-acetyl-alpha-D-muramoyl-L-alanine + ADP + phosphate + H(+). It functions in the pathway cell wall biogenesis; peptidoglycan biosynthesis. Cell wall formation. The protein is UDP-N-acetylmuramate--L-alanine ligase of Anoxybacillus flavithermus (strain DSM 21510 / WK1).